A 416-amino-acid chain; its full sequence is MQAEIIAVGTEILLGQIVDTNSAFIARELAEAGIEVYYHSLVGDNATRLTAVVEQARSRSDLVIISGGLGPTKDDLTKQTVAHLLGVKLVEDALAMAKIRRRFAINGREMTPNNRLQALYPAGSQPLANRTGLAVGAFYQDPDGADIMLLPGPPSETEPMFREQALPLLKQTYPRSEYLSSRVLRFFGIGESQLVTQLSDLIDQQTNPTIAPYAKVNEVTLRLTAQAPDEMQGQRLLDDLTATIKARVGDYLYGYGDDNSLAAVVVQTLIDRQLTITAAESLTAGQFQSTLGSVPGVSAVFPGGFVTYAASAKHDLLGVSQATIDQDGVVSAATAKEMASRSRERLDTDFSLSFTGVAGPDALEGQPAGTVWLGLAQRGQQPQAKLLHLTGTRSAIRERSVLTGLDWLRRTLQKVK.

Belongs to the CinA family.

The protein is Putative competence-damage inducible protein of Levilactobacillus brevis (strain ATCC 367 / BCRC 12310 / CIP 105137 / JCM 1170 / LMG 11437 / NCIMB 947 / NCTC 947) (Lactobacillus brevis).